Consider the following 175-residue polypeptide: Gamma-crystallin B (175 aa).

Beta/gamma crystallin 'Greek key' domains follow at residues 2-40 (GKITFYEDRAFQGRSYECTTDCPNLQPYFSRCNSIRVES) and 41-83 (GCWM…CLIP). The tract at residues 84–88 (PHSGA) is connecting peptide. Beta/gamma crystallin 'Greek key' domains lie at 89 to 129 (YRMK…NVLE) and 130 to 172 (GSWI…RRVM).

It belongs to the beta/gamma-crystallin family. As to quaternary structure, monomer.

Functionally, crystallins are the dominant structural components of the vertebrate eye lens. The chain is Gamma-crystallin B (CRYGB) from Homo sapiens (Human).